The following is a 328-amino-acid chain: MHTLIERLEKVTNSKELEEARLNALGKKGVFADKFNQLKHLNGEEKNAFAKEIHHYKQAFEKAFEWKKKAIIELELEERLKKEKIDVSLFNAIKTSSSHPLNYTKNKIIEFFTPLGYKLEIGSLVEDDFHNFSALNLPPYHPARDMQDTFYFKDHKLLRTHTSPVQIHTMQEQTPPIKMICLGETFRRDYDLTHTPMFHQIEGLVVDQKGNIRFTHLKGVIEDFLHYFFGGVKLRWRSSFFPFTEPSAEVDISCVFCKQEGCRVCSHTGWLEVLGCGMVNNAVFEAIGYENVSGFAFGMGIERLAMLTCQINDLRSFFETDLRVLESF.

Glu245 is a Mg(2+) binding site.

This sequence belongs to the class-II aminoacyl-tRNA synthetase family. Phe-tRNA synthetase alpha subunit type 1 subfamily. As to quaternary structure, tetramer of two alpha and two beta subunits. Requires Mg(2+) as cofactor.

The protein localises to the cytoplasm. It catalyses the reaction tRNA(Phe) + L-phenylalanine + ATP = L-phenylalanyl-tRNA(Phe) + AMP + diphosphate + H(+). This is Phenylalanine--tRNA ligase alpha subunit (pheS) from Helicobacter pylori (strain ATCC 700392 / 26695) (Campylobacter pylori).